The chain runs to 276 residues: Urease accessory protein UreD (276 aa).

The protein belongs to the UreD family. UreD, UreF and UreG form a complex that acts as a GTP-hydrolysis-dependent molecular chaperone, activating the urease apoprotein by helping to assemble the nickel containing metallocenter of UreC. The UreE protein probably delivers the nickel.

It is found in the cytoplasm. In terms of biological role, required for maturation of urease via the functional incorporation of the urease nickel metallocenter. This Verminephrobacter eiseniae (strain EF01-2) protein is Urease accessory protein UreD.